The primary structure comprises 210 residues: Small ribosomal subunit protein uS3 (210 aa).

The 70-residue stretch at 17–86 (IDEFLEKELR…NPQIDVQEIK (70 aa)) folds into the KH type-2 domain.

The protein belongs to the universal ribosomal protein uS3 family. As to quaternary structure, part of the 30S ribosomal subunit.

Binds the lower part of the 30S subunit head. In Pyrococcus abyssi (strain GE5 / Orsay), this protein is Small ribosomal subunit protein uS3.